A 291-amino-acid chain; its full sequence is Elongation factor Ts, mitochondrial (291 aa).

The protein belongs to the EF-Ts family.

Its subcellular location is the mitochondrion. Its function is as follows. Associates with the EF-Tu.GDP complex and induces the exchange of GDP to GTP. It remains bound to the aminoacyl-tRNA.EF-Tu.GTP complex up to the GTP hydrolysis stage on the ribosome. The protein is Elongation factor Ts, mitochondrial of Nematostella vectensis (Starlet sea anemone).